Consider the following 563-residue polypeptide: uncharacterized protein (563 aa).

The protein belongs to the HyuB family.

This is an uncharacterized protein from Methanocaldococcus jannaschii (strain ATCC 43067 / DSM 2661 / JAL-1 / JCM 10045 / NBRC 100440) (Methanococcus jannaschii).